Consider the following 505-residue polypeptide: Glycerol kinase (505 aa).

T14 is a binding site for ADP. ATP contacts are provided by T14, T15, and S16. T14 is a sn-glycerol 3-phosphate binding site. R18 is an ADP binding site. Positions 84, 85, 136, and 246 each coordinate sn-glycerol 3-phosphate. Glycerol-binding residues include R84, E85, Y136, D246, and Q247. Positions 268 and 311 each coordinate ADP. ATP contacts are provided by T268, G311, Q315, and G412. G412 and N416 together coordinate ADP.

This sequence belongs to the FGGY kinase family.

The catalysed reaction is glycerol + ATP = sn-glycerol 3-phosphate + ADP + H(+). It functions in the pathway polyol metabolism; glycerol degradation via glycerol kinase pathway; sn-glycerol 3-phosphate from glycerol: step 1/1. Its activity is regulated as follows. Inhibited by fructose 1,6-bisphosphate (FBP). Functionally, key enzyme in the regulation of glycerol uptake and metabolism. Catalyzes the phosphorylation of glycerol to yield sn-glycerol 3-phosphate. This is Glycerol kinase from Vibrio cholerae serotype O1 (strain M66-2).